We begin with the raw amino-acid sequence, 208 residues long: Uracil phosphoribosyltransferase (208 aa).

Residues Arg-78, Arg-103, and 130-138 (DPMLATGGT) each bind 5-phospho-alpha-D-ribose 1-diphosphate. Uracil-binding positions include Ile-193 and 198–200 (GDA). Asp-199 is a binding site for 5-phospho-alpha-D-ribose 1-diphosphate.

This sequence belongs to the UPRTase family. The cofactor is Mg(2+).

It catalyses the reaction UMP + diphosphate = 5-phospho-alpha-D-ribose 1-diphosphate + uracil. The protein operates within pyrimidine metabolism; UMP biosynthesis via salvage pathway; UMP from uracil: step 1/1. With respect to regulation, allosterically activated by GTP. Its function is as follows. Catalyzes the conversion of uracil and 5-phospho-alpha-D-ribose 1-diphosphate (PRPP) to UMP and diphosphate. In Desulforapulum autotrophicum (strain ATCC 43914 / DSM 3382 / VKM B-1955 / HRM2) (Desulfobacterium autotrophicum), this protein is Uracil phosphoribosyltransferase.